Consider the following 450-residue polypeptide: Protein tweety homolog 1 (450 aa).

Residues 1–43 (MGAPPGYRPSAWVHLLHQLPRADFQLRPVPSVFAPQEQEYQQA) lie on the Extracellular side of the membrane. The chain crosses the membrane as a helical span at residues 44–64 (LLLVAALAGLGLGLSLIFIAV). The Cytoplasmic segment spans residues 65–88 (YLIRFCCCRPPEPPGSKIPSPGGG). A helical membrane pass occupies residues 89–109 (CVTWSCIVALLAGCTGIGIGF). The Extracellular segment spans residues 110–214 (YGNSETSDGV…NVSFVEEYRW (105 aa)). N-linked (GlcNAc...) asparagine glycosylation is found at Asn130 and Asn205. The chain crosses the membrane as a helical span at residues 215 to 235 (LAYVLLLLLELLVCLFTLLGL). Topologically, residues 236–240 (AKQSK) are cytoplasmic. The chain crosses the membrane as a helical span at residues 241–261 (WLVIVMTVMSLLVLVLSWGSM). Residues 262-390 (GLEAATAVGL…LRGLCEDALE (129 aa)) are Extracellular-facing. Disulfide bonds link Cys275–Cys385 and Cys303–Cys370. Residues Asn284 and Asn355 are each glycosylated (N-linked (GlcNAc...) asparagine). A helical transmembrane segment spans residues 391–411 (GLLFLLLFSLLSAGALATALC). The Cytoplasmic portion of the chain corresponds to 412–450 (SLPRAWALFPPSDDYDDTDDDDPFNPQESKRFVQWQSSI). Positions 428–450 (DTDDDDPFNPQESKRFVQWQSSI) are disordered. Ser440 carries the phosphoserine modification.

Belongs to the tweety family. Homotetramer; disulfide-linked. Homodimer. N-glycosylated. Contains high-mannose, hybrid and complex oligosaccharides. In terms of tissue distribution, expressed in brain, eye, ovary and testis, and at lower levels in muscle, placenta, liver and lung.

The protein resides in the cell membrane. The enzyme catalyses chloride(in) = chloride(out). The catalysed reaction is L-glutamate(out) = L-glutamate(in). Its function is as follows. Calcium-independent, swelling-dependent volume-regulated anion channel (VRAC-swell) which plays a pivotal role in the process of regulatory volume decrease (RVD) in the brain through the efflux of anions like chloride and organic osmolytes like glutamate. Ca(2+)-independent, swelling-activated chloride channel, possibly involved in regulation of cell volume. In Homo sapiens (Human), this protein is Protein tweety homolog 1 (TTYH1).